Here is a 661-residue protein sequence, read N- to C-terminus: Altered inheritance of mitochondria protein 3-1 (661 aa).

Disordered regions lie at residues 19–99 (TKTV…YSGY), 116–142 (AQNT…SQYN), 154–194 (QPAG…TFQS), 263–419 (LPQQ…DSSS), 431–473 (RNIP…SPGI), 487–563 (YAGH…RKDN), and 615–661 (EAAT…FVHS). The span at 37-58 (KDKDTHHTDHHEEDEYSEDYHT) shows a compositional bias: basic and acidic residues. Over residues 120 to 142 (PYSSPAQQQPVSPQPPVQNSQYN) the composition is skewed to low complexity. Positions 263–318 (LPQQQQQQQQQPEYNTQLQQNQQLHNQQAYGQQQQIYSNNTQPQYVSQTQQTSYTQ) are enriched in low complexity. 2 stretches are compositionally biased toward polar residues: residues 319-328 (NAPPQQTRSP) and 356-371 (VNQT…NEAL). Residues 390-399 (THRDRGRASV) are compositionally biased toward basic and acidic residues. A compositionally biased stretch (polar residues) spans 406 to 419 (ENMQTNNSTIDSSS). Residues 434–447 (PAPAVGPPGAATRA) are compositionally biased toward low complexity. 3 stretches are compositionally biased toward polar residues: residues 458–473 (SQSM…SPGI), 512–533 (RSTS…PSRD), and 541–552 (RSTVSSIQSSNR).

This sequence belongs to the AIM3 family.

It is found in the membrane raft. This Candida glabrata (strain ATCC 2001 / BCRC 20586 / JCM 3761 / NBRC 0622 / NRRL Y-65 / CBS 138) (Yeast) protein is Altered inheritance of mitochondria protein 3-1 (AIM3-1).